A 70-amino-acid polypeptide reads, in one-letter code: DNA-directed RNA polymerase subunit omega (70 aa).

Belongs to the RNA polymerase subunit omega family. In terms of assembly, the RNAP catalytic core consists of 2 alpha, 1 beta, 1 beta' and 1 omega subunit. When a sigma factor is associated with the core the holoenzyme is formed, which can initiate transcription.

The catalysed reaction is RNA(n) + a ribonucleoside 5'-triphosphate = RNA(n+1) + diphosphate. Promotes RNA polymerase assembly. Latches the N- and C-terminal regions of the beta' subunit thereby facilitating its interaction with the beta and alpha subunits. This Nitratiruptor sp. (strain SB155-2) protein is DNA-directed RNA polymerase subunit omega.